A 596-amino-acid polypeptide reads, in one-letter code: Elongation factor 4 (596 aa).

The 182-residue stretch at 2–183 (KNIRNFSIIA…AIVRRVPAPD (182 aa)) folds into the tr-type G domain. Residues 14–19 (DHGKST) and 130–133 (NKID) each bind GTP.

The protein belongs to the TRAFAC class translation factor GTPase superfamily. Classic translation factor GTPase family. LepA subfamily.

The protein resides in the cell inner membrane. It carries out the reaction GTP + H2O = GDP + phosphate + H(+). Functionally, required for accurate and efficient protein synthesis under certain stress conditions. May act as a fidelity factor of the translation reaction, by catalyzing a one-codon backward translocation of tRNAs on improperly translocated ribosomes. Back-translocation proceeds from a post-translocation (POST) complex to a pre-translocation (PRE) complex, thus giving elongation factor G a second chance to translocate the tRNAs correctly. Binds to ribosomes in a GTP-dependent manner. This chain is Elongation factor 4, found in Campylobacter curvus (strain 525.92).